The primary structure comprises 307 residues: Pyridoxal 5'-phosphate synthase subunit PdxS (307 aa).

Asp-37 is a D-ribose 5-phosphate binding site. Lys-94 functions as the Schiff-base intermediate with D-ribose 5-phosphate in the catalytic mechanism. Residue Gly-166 participates in D-ribose 5-phosphate binding. Arg-178 lines the D-glyceraldehyde 3-phosphate pocket. D-ribose 5-phosphate is bound by residues Gly-227 and 248-249 (GS).

It belongs to the PdxS/SNZ family. In the presence of PdxT, forms a dodecamer of heterodimers.

It carries out the reaction aldehydo-D-ribose 5-phosphate + D-glyceraldehyde 3-phosphate + L-glutamine = pyridoxal 5'-phosphate + L-glutamate + phosphate + 3 H2O + H(+). It functions in the pathway cofactor biosynthesis; pyridoxal 5'-phosphate biosynthesis. Functionally, catalyzes the formation of pyridoxal 5'-phosphate from ribose 5-phosphate (RBP), glyceraldehyde 3-phosphate (G3P) and ammonia. The ammonia is provided by the PdxT subunit. Can also use ribulose 5-phosphate and dihydroxyacetone phosphate as substrates, resulting from enzyme-catalyzed isomerization of RBP and G3P, respectively. This is Pyridoxal 5'-phosphate synthase subunit PdxS from Mycobacterium leprae (strain Br4923).